A 386-amino-acid polypeptide reads, in one-letter code: Probable Xaa-Pro aminopeptidase PMAA_074180 (386 aa).

4 residues coordinate Mn(2+): Asp160, Asp171, Glu311, and Glu350.

This sequence belongs to the peptidase M24B family. Requires Mn(2+) as cofactor.

The catalysed reaction is Release of any N-terminal amino acid, including proline, that is linked to proline, even from a dipeptide or tripeptide.. Its function is as follows. Catalyzes the removal of a penultimate prolyl residue from the N-termini of peptides. This chain is Probable Xaa-Pro aminopeptidase PMAA_074180, found in Talaromyces marneffei (strain ATCC 18224 / CBS 334.59 / QM 7333) (Penicillium marneffei).